The sequence spans 926 residues: Isoleucine--tRNA ligase (926 aa).

A 'HIGH' region motif is present at residues 57 to 67 (PYANGNIHMGH). Glu-555 contributes to the L-isoleucyl-5'-AMP binding site. Positions 596 to 600 (KMSKS) match the 'KMSKS' region motif. Lys-599 is a binding site for ATP. 4 residues coordinate Zn(2+): Cys-897, Cys-900, Cys-914, and Cys-917.

It belongs to the class-I aminoacyl-tRNA synthetase family. IleS type 1 subfamily. As to quaternary structure, monomer. Zn(2+) is required as a cofactor.

Its subcellular location is the cytoplasm. The enzyme catalyses tRNA(Ile) + L-isoleucine + ATP = L-isoleucyl-tRNA(Ile) + AMP + diphosphate. Its function is as follows. Catalyzes the attachment of isoleucine to tRNA(Ile). As IleRS can inadvertently accommodate and process structurally similar amino acids such as valine, to avoid such errors it has two additional distinct tRNA(Ile)-dependent editing activities. One activity is designated as 'pretransfer' editing and involves the hydrolysis of activated Val-AMP. The other activity is designated 'posttransfer' editing and involves deacylation of mischarged Val-tRNA(Ile). The protein is Isoleucine--tRNA ligase of Natranaerobius thermophilus (strain ATCC BAA-1301 / DSM 18059 / JW/NM-WN-LF).